A 1139-amino-acid polypeptide reads, in one-letter code: Liprin-alpha (1139 aa).

4 coiled-coil regions span residues 30-144 (PSDR…SLRM), 172-298 (EHHK…KNQI), 329-517 (IRDL…AQFQ), and 655-701 (QDAQ…EFYD). 2 disordered regions span residues 700 to 720 (YDDQ…LDNM) and 764 to 847 (NQFD…DRRK). 2 stretches are compositionally biased toward polar residues: residues 704-719 (GIST…QLDN) and 778-787 (PASSVASSTD). SAM domains are found at residues 867–933 (WNGP…MVSL), 952–1016 (NHEY…LKKV), and 1040–1109 (WSNE…LVND).

Belongs to the liprin family. Liprin-alpha subfamily. In terms of tissue distribution, detected in vulval muscle and other cells near the vulva; in neurons located in the lateral ganglion, posterior ganglion, ventral cord and lateral body; and in pharyngeal and body wall muscle cells.

Its subcellular location is the synapse. In terms of biological role, may play a role in regulating the structure of the neuronal region, called the active zone, from which synaptic vesicles send neurotransmitter signals across the synapse. This may be in association with the liprin-beta protein hlb-1. The chain is Liprin-alpha from Caenorhabditis elegans.